We begin with the raw amino-acid sequence, 132 residues long: MVMSDPIADLLTRIRNANVVRHEVVEVPSSNIKKAIANIMLTEGYIRDLEEYRDGSVDMLRITMKYGQNKERIITGLKRISKPGLRVYCRKDETPKVLNGLGVAVVSTSKGIVTDREARKLGVGGEVLCYIW.

Belongs to the universal ribosomal protein uS8 family. Part of the 30S ribosomal subunit. Contacts proteins S5 and S12.

One of the primary rRNA binding proteins, it binds directly to 16S rRNA central domain where it helps coordinate assembly of the platform of the 30S subunit. This is Small ribosomal subunit protein uS8 from Clostridium botulinum (strain ATCC 19397 / Type A).